The chain runs to 142 residues: MELRAFCVILLITILAVSSQAAKNKKEKGKKGASDCTEWTWGSCIPNSKDCGAGTREGTCKEETRKLKCKIPCNWKKDFGADCKYKFENWGECNATTGQKVRSGTLKKALYNADCQQTVEAAKPCSLKTKSKSKGKKGKGKE.

The first 20 residues, 1-20, serve as a signal peptide directing secretion; that stretch reads MELRAFCVILLITILAVSSQ. 5 disulfide bridges follow: Cys36/Cys60, Cys44/Cys69, Cys51/Cys73, Cys83/Cys115, and Cys93/Cys125.

Belongs to the pleiotrophin family. As to expression, in adults, expression is highest in the brain, eye and bone, with lower expression in the heart and lung. Not expressed in the ovary. In the tailbud stage embryo, expressed in the head and tail regions as well as in the central nervous system (CNS).

It is found in the secreted. Secreted protein that functions as a cytokine and growth factor and mediates its signal through cell-surface proteoglycan and non-proteoglycan receptors. Binds cell-surface proteoglycan receptors via their chondroitin sulfate (CS) groups. Thereby regulates many processes like inflammatory response, cell proliferation, cell adhesion, cell growth, cell survival, tissue regeneration, cell differentiation and cell migration. Inhibits mesoderm formation and promotes neural formation during development. Plays a role in development of the neuromuscular junction (NMJ). Has antibacterial activity against both Gram-positive and Gram-negative bacteria. The chain is Midkine-B (mdk-b) from Xenopus laevis (African clawed frog).